The chain runs to 330 residues: Glycerol-3-phosphate dehydrogenase [NAD(P)+] (330 aa).

Ser-11, Phe-12, Arg-32, and Lys-106 together coordinate NADPH. Residues Lys-106, Gly-133, and Ser-135 each contribute to the sn-glycerol 3-phosphate site. Ala-137 is a binding site for NADPH. The sn-glycerol 3-phosphate site is built by Lys-188, Asp-241, Ser-251, Arg-252, and Asn-253. Residue Lys-188 is the Proton acceptor of the active site. Arg-252 serves as a coordination point for NADPH. Residues Val-276 and Glu-278 each coordinate NADPH.

This sequence belongs to the NAD-dependent glycerol-3-phosphate dehydrogenase family.

It is found in the cytoplasm. It carries out the reaction sn-glycerol 3-phosphate + NAD(+) = dihydroxyacetone phosphate + NADH + H(+). The catalysed reaction is sn-glycerol 3-phosphate + NADP(+) = dihydroxyacetone phosphate + NADPH + H(+). The protein operates within membrane lipid metabolism; glycerophospholipid metabolism. Functionally, catalyzes the reduction of the glycolytic intermediate dihydroxyacetone phosphate (DHAP) to sn-glycerol 3-phosphate (G3P), the key precursor for phospholipid synthesis. This is Glycerol-3-phosphate dehydrogenase [NAD(P)+] from Clostridium botulinum (strain Alaska E43 / Type E3).